Reading from the N-terminus, the 97-residue chain is Late embryogenesis abundant protein Lea5 (97 aa).

Belongs to the LEA type 3 family.

In Citrus sinensis (Sweet orange), this protein is Late embryogenesis abundant protein Lea5 (LEA5).